A 110-amino-acid chain; its full sequence is Protein YcgL (110 aa).

Residues 14–98 (MFCVIYRSSK…PPEDLLKQHL (85 aa)) enclose the YcgL domain. A disordered region spans residues 87–110 (PPPPEDLLKQHLSSVGQNTSPADR). The span at 97-110 (HLSSVGQNTSPADR) shows a compositional bias: polar residues.

The chain is Protein YcgL from Salmonella choleraesuis (strain SC-B67).